The sequence spans 328 residues: Putative GDP-L-fucose synthase 2 (328 aa).

Ala-2 bears the N-acetylalanine mark. Residue 26 to 32 (GHRGLVG) participates in NADP(+) binding. The Proton donor/acceptor role is filled by Tyr-152. Residues Lys-156, 179–182 (PTNL), and His-195 contribute to the NADP(+) site. Positions 203, 218, 225, and 285 each coordinate substrate.

This sequence belongs to the NAD(P)-dependent epimerase/dehydratase family. Fucose synthase subfamily. In terms of assembly, homodimer.

The catalysed reaction is GDP-beta-L-fucose + NADP(+) = GDP-4-dehydro-alpha-D-rhamnose + NADPH + H(+). Its pathway is nucleotide-sugar biosynthesis; GDP-L-fucose biosynthesis via de novo pathway; GDP-L-fucose from GDP-alpha-D-mannose: step 2/2. In terms of biological role, catalyzes the two-step NADP-dependent conversion of GDP-4-dehydro-6-deoxy-D-mannose to GDP-fucose, involving an epimerase and a reductase reaction. The protein is Putative GDP-L-fucose synthase 2 (GER2) of Arabidopsis thaliana (Mouse-ear cress).